An 818-amino-acid polypeptide reads, in one-letter code: Auxin response factor 12 (818 aa).

The segment covering 1-10 (MSSSSAASIG) has biased composition (low complexity). The tract at residues 1–24 (MSSSSAASIGPPQPPPPPAPPEEE) is disordered. Over residues 11 to 20 (PPQPPPPPAP) the composition is skewed to pro residues. The segment at residues 135–237 (FCKTLTASDT…QLLLGIRRAS (103 aa)) is a DNA-binding region (TF-B3). 2 disordered regions span residues 526–565 (NDQK…FSDP) and 629–648 (GSVL…NKIG). The span at 629 to 640 (GSVLHNSPTSKD) shows a compositional bias: polar residues. The PB1 domain maps to 719–803 (RTFVKVYKSG…WYIKILSPED (85 aa)).

This sequence belongs to the ARF family. In terms of assembly, homodimers and heterodimers. As to expression, expressed in roots, culms, leaves and young panicles.

It localises to the nucleus. Its function is as follows. Auxin response factors (ARFs) are transcriptional factors that bind specifically to the DNA sequence 5'-TGTCTC-3' found in the auxin-responsive promoter elements (AuxREs). The protein is Auxin response factor 12 (ARF12) of Oryza sativa subsp. japonica (Rice).